We begin with the raw amino-acid sequence, 89 residues long: MALSAAKKKEILSEFGLHETDTGSTEAQVALLTERIRQLTEHLREHKHDHHSRRGLMLLVGRRKRLLKYLAANNVDRYRNLIARLGLRR.

It belongs to the universal ribosomal protein uS15 family. In terms of assembly, part of the 30S ribosomal subunit. Forms a bridge to the 50S subunit in the 70S ribosome, contacting the 23S rRNA.

One of the primary rRNA binding proteins, it binds directly to 16S rRNA where it helps nucleate assembly of the platform of the 30S subunit by binding and bridging several RNA helices of the 16S rRNA. In terms of biological role, forms an intersubunit bridge (bridge B4) with the 23S rRNA of the 50S subunit in the ribosome. The polypeptide is Small ribosomal subunit protein uS15 (Corynebacterium kroppenstedtii (strain DSM 44385 / JCM 11950 / CIP 105744 / CCUG 35717)).